The primary structure comprises 1127 residues: Ras guanine nucleotide exchange factor F (1127 aa).

Disordered stretches follow at residues 1-82 and 96-154; these read MTDK…SLLN and NSGG…SSSS. Low complexity-rich tracts occupy residues 23–53 and 67–82; these read NQPS…TTSP and NNNN…SLLN. Over residues 122–132 the composition is skewed to polar residues; it reads RTSTTLAQFSG. Positions 133–154 are enriched in low complexity; sequence SSLPNTENSSPPPSSSLISSSS. Kelch repeat units lie at residues 212–261, 262–311, 313–366, 367–418, and 420–469; these read GFYL…LYNN, SMYI…VESG, MIVF…MHKG, NMYV…LFQD, and IFIS…VKGN. The 33-residue stretch at 557–589 folds into the LisH domain; it reads SHQFVLQLIMEYLERNTYHKVIAAIQKESGVLH. In terms of domain architecture, N-terminal Ras-GEF spans 673–804; it reads NKVQIKAATF…KLRELKKKLQ (132 aa). A Ras-GEF domain is found at 835 to 1062; sequence DELEIARQMT…YDLNLLSESL (228 aa). Positions 1090–1127 are disordered; the sequence is LGSARELNNSNRDSNNITGSSSNNNSNSSNSLSPIVKL. Over residues 1103–1127 the composition is skewed to low complexity; the sequence is SNNITGSSSNNNSNSSNSLSPIVKL.

Its function is as follows. Promotes the exchange of Ras-bound GDP by GTP. This Dictyostelium discoideum (Social amoeba) protein is Ras guanine nucleotide exchange factor F (gefF).